Reading from the N-terminus, the 167-residue chain is uncharacterized protein (167 aa).

The helical transmembrane segment at 5–27 threads the bilayer; it reads LILLTFVSFVFSKTFYYDVYVFF.

The protein resides in the membrane. This is an uncharacterized protein from Aquifex aeolicus (strain VF5).